A 339-amino-acid polypeptide reads, in one-letter code: DNA-directed RNA polymerase subunit alpha (339 aa).

Residues 1-235 (MTIQKNWQEL…DQLNVFVNFE (235 aa)) form an alpha N-terminal domain (alpha-NTD) region. The interval 251-339 (FNPAFLKKVD…ELAKRFEDHY (89 aa)) is alpha C-terminal domain (alpha-CTD).

This sequence belongs to the RNA polymerase alpha chain family. In terms of assembly, homodimer. The RNAP catalytic core consists of 2 alpha, 1 beta, 1 beta' and 1 omega subunit. When a sigma factor is associated with the core the holoenzyme is formed, which can initiate transcription.

It catalyses the reaction RNA(n) + a ribonucleoside 5'-triphosphate = RNA(n+1) + diphosphate. In terms of biological role, DNA-dependent RNA polymerase catalyzes the transcription of DNA into RNA using the four ribonucleoside triphosphates as substrates. In Rhodopseudomonas palustris (strain BisB5), this protein is DNA-directed RNA polymerase subunit alpha.